The following is a 111-amino-acid chain: MNAHKERLESNLLELLQEALASLNDSELNSLSVTRVECSKGKHHAFVFVLSQDHKILSKLKKAEGLIRQFVLQASGWFKCPKLSFVLDNSLEKQLRLDAIFNEIAKGKDND.

The protein belongs to the RbfA family. Monomer. Binds 30S ribosomal subunits, but not 50S ribosomal subunits or 70S ribosomes.

The protein resides in the cytoplasm. Functionally, one of several proteins that assist in the late maturation steps of the functional core of the 30S ribosomal subunit. Associates with free 30S ribosomal subunits (but not with 30S subunits that are part of 70S ribosomes or polysomes). Required for efficient processing of 16S rRNA. May interact with the 5'-terminal helix region of 16S rRNA. The protein is Ribosome-binding factor A of Helicobacter pylori (strain Shi470).